The sequence spans 1816 residues: uncharacterized protein (1816 aa).

2 disordered regions span residues 338–357 and 562–605; these read DSSS…NNNN and ELEK…IKPK. Residues 339–357 are compositionally biased toward low complexity; that stretch reads SSSSSSNNNNNNNNNNNNN. Positions 562–577 are enriched in basic and acidic residues; sequence ELEKERIKKEKEDSKK. The segment covering 581–603 has biased composition (low complexity); it reads KQSSSSSSSSTTTTSTTTSSTIK. Positions 826–999 constitute a Helicase ATP-binding domain; it reads LDIVDKRESA…FLKKIDPNRK (174 aa). 839-846 provides a ligand contact to ATP; it reads ASTSSGKT. The DEAH box motif lies at 949 to 952; the sequence is DEVH. Residues 1198–1379 enclose the Helicase C-terminal domain; sequence QLDLVIERFQ…SVVSPSLCLS (182 aa). The interval 1388–1487 is disordered; it reads TNGSANKSNE…TTTKTPTTTS (100 aa). A compositionally biased stretch (basic and acidic residues) spans 1395–1427; that stretch reads SNEENKVQVKENEKEREKEKEKEKEKEKEKETI. Positions 1445-1454 are enriched in acidic residues; it reads NWDDDEEETA. The span at 1456–1487 shows a compositional bias: low complexity; that stretch reads STKTTPATTPTTTTTENTPATTTTTKTPTTTS.

It belongs to the helicase family. SKI2 subfamily.

Its subcellular location is the nucleus. This is an uncharacterized protein from Dictyostelium discoideum (Social amoeba).